The sequence spans 220 residues: Adenylate kinase (220 aa).

13-18 (GAGKGT) lines the ATP pocket. The tract at residues 33–62 (STGDILRAAVKEGTPLGLEAQSYMNRGALV) is NMP. AMP contacts are provided by residues Thr34, Arg39, 60–62 (ALV), 88–91 (GFPR), and Gln95. The interval 129 to 170 (GRRTCPLCKRIFHVRFNPPPAAPPFCTDHTDCPSELVQRPDD) is LID. Arg130 is a binding site for ATP. Cys133 and Cys136 together coordinate Zn(2+). 139–140 (IF) is an ATP binding site. Zn(2+) contacts are provided by Asp156 and Cys160. 2 residues coordinate AMP: Arg167 and Arg178. Arg206 lines the ATP pocket.

The protein belongs to the adenylate kinase family. Monomer.

It localises to the cytoplasm. The enzyme catalyses AMP + ATP = 2 ADP. It functions in the pathway purine metabolism; AMP biosynthesis via salvage pathway; AMP from ADP: step 1/1. Catalyzes the reversible transfer of the terminal phosphate group between ATP and AMP. Plays an important role in cellular energy homeostasis and in adenine nucleotide metabolism. The protein is Adenylate kinase of Gloeobacter violaceus (strain ATCC 29082 / PCC 7421).